Consider the following 417-residue polypeptide: Phosphoglycerate kinase 2 (417 aa).

Serine 2 carries the post-translational modification N-acetylserine. Phosphoserine is present on residues serine 2 and serine 4. Lysine 11 carries the post-translational modification N6-acetyllysine. (2R)-3-phosphoglycerate-binding residues include valine 23, aspartate 24, phenylalanine 25, asparagine 26, glutamine 38, and arginine 39. Lysine 48 is subject to N6-acetyllysine. Residues serine 62, histidine 63, glycine 65, and arginine 66 each coordinate (2R)-3-phosphoglycerate. N6-acetyllysine is present on residues lysine 75, lysine 86, and lysine 97. (2R)-3-phosphoglycerate-binding residues include leucine 122 and arginine 123. Residues lysine 131 and lysine 146 each carry the N6-acetyllysine modification. 2 residues coordinate (2R)-3-phosphoglycerate: histidine 170 and arginine 171. At tyrosine 196 the chain carries Phosphotyrosine. An N6-acetyllysine modification is found at lysine 199. Glycine 214 contacts ADP. Glycine 214 contributes to the CDP binding site. Positions 215 and 216 each coordinate AMP. Alanine 215 lines the ATP pocket. Alanine 215 is a binding site for Mg(2+). Mg(2+)-binding residues include alanine 218 and aspartate 219. Aspartate 219 provides a ligand contact to CDP. AMP is bound at residue lysine 220. Lysine 220 is a binding site for ATP. Glycine 238 contacts ADP. A CDP-binding site is contributed by glycine 238. Glycine 239 contacts AMP. Glycine 239 is an ATP binding site. Lysine 267 and lysine 291 each carry N6-acetyllysine. Residue glycine 313 participates in AMP binding. Glycine 313 provides a ligand contact to ATP. Residues glycine 338 and phenylalanine 343 each coordinate CDP. Phenylalanine 343 serves as a coordination point for ADP. Glutamate 344 contacts AMP. 3 residues coordinate ATP: glutamate 344, aspartate 375, and threonine 376. A Mg(2+)-binding site is contributed by aspartate 375.

This sequence belongs to the phosphoglycerate kinase family. As to quaternary structure, monomer. Mg(2+) serves as cofactor. As to expression, mainly found in round spermatids. Localized on the principle piece in the sperm (at protein level). Testis-specific. Expression significantly decreased in the testis of elderly men.

The protein resides in the cytoplasm. The catalysed reaction is (2R)-3-phosphoglycerate + ATP = (2R)-3-phospho-glyceroyl phosphate + ADP. Its pathway is carbohydrate degradation; glycolysis; pyruvate from D-glyceraldehyde 3-phosphate: step 2/5. Functionally, essential for sperm motility and male fertility. Not required for the completion of spermatogenesis. This Homo sapiens (Human) protein is Phosphoglycerate kinase 2 (PGK2).